Here is a 232-residue protein sequence, read N- to C-terminus: MTKLSKRVQALRTKVDRNRTYPVTEALALVKECATAKFDESIDIAVNLGIDARKSDQLVRGSVVLPAGTGKSVRVAVFAQGDKAEAARAAGADVVGFEDLAEQVKAGNIDFDLCIATPDAMRVVGQLGQILGPRGLMPNPKVGTVTMDVTTAVKNAKAGQVQYRTDKGGIIHATIGRASFSTEALQQNLGALVDALVKAKPAASKGIYLRRVALSSTMGSGVRVEPSSINAA.

This sequence belongs to the universal ribosomal protein uL1 family. As to quaternary structure, part of the 50S ribosomal subunit.

Functionally, binds directly to 23S rRNA. The L1 stalk is quite mobile in the ribosome, and is involved in E site tRNA release. Its function is as follows. Protein L1 is also a translational repressor protein, it controls the translation of the L11 operon by binding to its mRNA. The sequence is that of Large ribosomal subunit protein uL1 from Aromatoleum aromaticum (strain DSM 19018 / LMG 30748 / EbN1) (Azoarcus sp. (strain EbN1)).